Here is a 523-residue protein sequence, read N- to C-terminus: Sialate O-acetylesterase (523 aa).

The N-terminal stretch at 1–23 (MVAPGLVLGLVLPLILWADRSAG) is a signal peptide. N-linked (GlcNAc...) asparagine glycosylation is found at N107, N138, N267, N290, N401, and N422.

Widely expressed with high expression in the testis, prostate, and colon.

The protein resides in the lysosome. It localises to the cytoplasm. It carries out the reaction N-acetyl-9-O-acetylneuraminate + H2O = N-acetylneuraminate + acetate + H(+). The catalysed reaction is an Ac-O-9-sialoglycoconjugate + H2O = a sialoglycoconjugate + acetate + H(+). Its function is as follows. Catalyzes the removal of O-acetyl ester groups from position 9 of the free diacetylated sialate N-acetyl-9-O-acetylneuraminate (Neu5,9Ac2) in the cytosol and of the diacetylated sialate residues of sialylglycoconjugates in the lysosomes. Together with the sialate-O-acetyltransferase they regulate the balance of acetylated sialoglycoconjugates, key players in various processes such as cell-cell interactions, host-pathogen recognition, and tumor antigenicity. The sequence is that of Sialate O-acetylesterase (SIAE) from Homo sapiens (Human).